The primary structure comprises 449 residues: Tubulin alpha chain (449 aa).

Positions 11, 71, 140, 144, 145, 179, 206, and 228 each coordinate GTP. Residue E71 participates in Mg(2+) binding. The active site involves E254.

It belongs to the tubulin family. Dimer of alpha and beta chains. A typical microtubule is a hollow water-filled tube with an outer diameter of 25 nm and an inner diameter of 15 nM. Alpha-beta heterodimers associate head-to-tail to form protofilaments running lengthwise along the microtubule wall with the beta-tubulin subunit facing the microtubule plus end conferring a structural polarity. Microtubules usually have 13 protofilaments but different protofilament numbers can be found in some organisms and specialized cells. It depends on Mg(2+) as a cofactor.

It is found in the cytoplasm. The protein localises to the cytoskeleton. It catalyses the reaction GTP + H2O = GDP + phosphate + H(+). Tubulin is the major constituent of microtubules, a cylinder consisting of laterally associated linear protofilaments composed of alpha- and beta-tubulin heterodimers. Microtubules grow by the addition of GTP-tubulin dimers to the microtubule end, where a stabilizing cap forms. Below the cap, tubulin dimers are in GDP-bound state, owing to GTPase activity of alpha-tubulin. This is Tubulin alpha chain (TUBA) from Sordaria macrospora (strain ATCC MYA-333 / DSM 997 / K(L3346) / K-hell).